Reading from the N-terminus, the 333-residue chain is D-alanine--D-alanine ligase (333 aa).

An ATP-grasp domain is found at 124 to 329; it reads KMWFSALGIP…FTEYLYSNIK (206 aa). 154–209 lines the ATP pocket; sequence ALETWGSVFIKAASQGSSVGCYRVDSIDELASSLKEAFSYSPYVVVEKTIHARELE. Mg(2+)-binding residues include Asp-283, Glu-296, and Asn-298.

Belongs to the D-alanine--D-alanine ligase family. It depends on Mg(2+) as a cofactor. Mn(2+) serves as cofactor.

It is found in the cytoplasm. The catalysed reaction is 2 D-alanine + ATP = D-alanyl-D-alanine + ADP + phosphate + H(+). It participates in cell wall biogenesis; peptidoglycan biosynthesis. Its function is as follows. Cell wall formation. This Shewanella sediminis (strain HAW-EB3) protein is D-alanine--D-alanine ligase.